The sequence spans 356 residues: Kelch domain-containing protein VC_1773 (356 aa).

4 Kelch repeats span residues 72 to 125 (KLYV…SLSP), 163 to 210 (TIFM…HKNN), 288 to 331 (NLYA…ASNG), and 333 to 355 (AMYVLGGENSNGDAMTRCLSLLM).

This is Kelch domain-containing protein VC_1773 from Vibrio cholerae serotype O1 (strain ATCC 39315 / El Tor Inaba N16961).